The chain runs to 374 residues: Mitochondrial inner membrane protein oxa1-1 (374 aa).

Residues 77 to 97 (TINVYAGAPWWVSIILTTLGV) form a helical membrane-spanning segment. Residues 98 to 159 (RLALTPVMIA…GIYLKHNVNP (62 aa)) are Mitochondrial intermembrane-facing. The helical transmembrane segment at 160-180 (FAIFILPLTQSAVFFSFFYAI) threads the bilayer. Over 181–242 (RKMSRLSVDG…TIGNSTNWRT (62 aa)) the chain is Mitochondrial matrix. Residues 243–263 (FFFLCCLLSPLLTAKLPAAIF) form a helical membrane-spanning segment. Residues 264-374 (MYWIPSSLFN…SKKNSKKQSN (111 aa)) lie on the Mitochondrial intermembrane side of the membrane.

This sequence belongs to the OXA1/ALB3/YidC family.

The protein localises to the mitochondrion inner membrane. Functionally, required for the insertion of integral membrane proteins into the mitochondrial inner membrane. Essential for the activity and assembly of cytochrome c oxidase. Not essential for viability, while oxa102 is essential. When both genes are deleted the cell is non-viable, suggesting that oxa101 act as a back-up for oxa102. This chain is Mitochondrial inner membrane protein oxa1-1 (oxa101), found in Schizosaccharomyces pombe (strain 972 / ATCC 24843) (Fission yeast).